The primary structure comprises 73 residues: U3-agatoxin-Ao1e (73 aa).

A signal peptide spans Met1–Ala20. Residues Ile21–Arg34 constitute a propeptide that is removed on maturation. Intrachain disulfides connect Cys36–Cys52, Cys43–Cys57, Cys51–Cys67, and Cys59–Cys65. Asparagine amide is present on Asn71.

Belongs to the neurotoxin 07 (Beta/delta-agtx) family. 03 (aga-4) subfamily. Aga sub-subfamily. In terms of tissue distribution, expressed by the venom gland.

The protein localises to the secreted. Insecticidal neurotoxin that induces an irreversible spastic paralysis when injected into insects. Modifies presynaptic voltage-gated sodium channels (Nav), causing them to open at the normal resting potential of the nerve. This leads to spontaneous release of neurotransmitter and repetitive action potentials in motor neurons. This chain is U3-agatoxin-Ao1e, found in Agelena orientalis (Funnel-web spider).